A 338-amino-acid chain; its full sequence is Uroporphyrinogen decarboxylase (338 aa).

Substrate contacts are provided by residues 23–27, D72, Y146, T201, and H312; that span reads RQAGR.

It belongs to the uroporphyrinogen decarboxylase family. As to quaternary structure, homodimer.

The protein localises to the cytoplasm. It carries out the reaction uroporphyrinogen III + 4 H(+) = coproporphyrinogen III + 4 CO2. It functions in the pathway porphyrin-containing compound metabolism; protoporphyrin-IX biosynthesis; coproporphyrinogen-III from 5-aminolevulinate: step 4/4. Its function is as follows. Catalyzes the decarboxylation of four acetate groups of uroporphyrinogen-III to yield coproporphyrinogen-III. The sequence is that of Uroporphyrinogen decarboxylase from Thermodesulfovibrio yellowstonii (strain ATCC 51303 / DSM 11347 / YP87).